Here is a 305-residue protein sequence, read N- to C-terminus: MSKKLTFQEIILTLQQFWNDQGCMLMQAYDNEKGAGTMSPYTFLRAIGPEPWNAAYVEPSRRPADGRYGENPNRLYQHHQFQVVMKPSPSNIQELYLQSLELLGINPLEHDIRFVEDNWENPSTGSAGLGWEVWLDGMEITQFTYFQQVGGLPTHPVTAEVTYGLERLASYIQEVDSVYDIEWADGVKYGEIFTHPEYEHSKYSFEVSDQDLLLGNFERFEAEAKRCLDEHLVHPAYDYVLKCSHTFNLLDARGAVSVTERAGYIARIRNLARVVAKTFVAERKRLGYPLLDAETREKLLAEEGE.

It belongs to the class-II aminoacyl-tRNA synthetase family. In terms of assembly, tetramer of two alpha and two beta subunits.

The protein localises to the cytoplasm. It carries out the reaction tRNA(Gly) + glycine + ATP = glycyl-tRNA(Gly) + AMP + diphosphate. This is Glycine--tRNA ligase alpha subunit from Streptococcus sanguinis (strain SK36).